We begin with the raw amino-acid sequence, 105 residues long: MTASFKAVMIGGVRWYQQHISANTPPCCKYYPTCSNYAIEALERYGAFKGGVLAVLRLLRCRPWSRGGIDDVPQRYSVFYRFSWSKAHEEPRLTPLATTQREAQR.

It belongs to the UPF0161 family.

The protein resides in the cell membrane. Functionally, could be involved in insertion of integral membrane proteins into the membrane. The polypeptide is Putative membrane protein insertion efficiency factor (Bifidobacterium longum (strain NCC 2705)).